Reading from the N-terminus, the 385-residue chain is S-adenosylmethionine synthase (385 aa).

His16 is a binding site for ATP. Residue Asp18 participates in Mg(2+) binding. K(+) is bound at residue Glu44. Residues Glu57 and Gln100 each coordinate L-methionine. Residues 100 to 110 (QSPDINQGVDR) are flexible loop. ATP is bound by residues 164-166 (DGK), 230-231 (KF), Asp239, 245-246 (RK), Ala262, and Lys266. An L-methionine-binding site is contributed by Asp239. Lys270 serves as a coordination point for L-methionine.

Belongs to the AdoMet synthase family. Homotetramer; dimer of dimers. The cofactor is Mg(2+). K(+) serves as cofactor.

The protein resides in the cytoplasm. The enzyme catalyses L-methionine + ATP + H2O = S-adenosyl-L-methionine + phosphate + diphosphate. It functions in the pathway amino-acid biosynthesis; S-adenosyl-L-methionine biosynthesis; S-adenosyl-L-methionine from L-methionine: step 1/1. Catalyzes the formation of S-adenosylmethionine (AdoMet) from methionine and ATP. The overall synthetic reaction is composed of two sequential steps, AdoMet formation and the subsequent tripolyphosphate hydrolysis which occurs prior to release of AdoMet from the enzyme. The polypeptide is S-adenosylmethionine synthase (Helicobacter pylori (strain G27)).